Reading from the N-terminus, the 117-residue chain is Immunoglobulin heavy variable 1-24 (117 aa).

The first 19 residues, 1 to 19, serve as a signal peptide directing secretion; sequence MDCTWRILFLVAAATGTHA. The framework-1 stretch occupies residues 20–44; it reads QVQLVQSGAEVKKPGASVKVSCKVS. The Ig-like domain occupies 20–117; that stretch reads QVQLVQSGAE…EDTAVYYCAT (98 aa). Cysteine 41 and cysteine 115 form a disulfide bridge. Residues 45 to 52 form a complementarity-determining-1 region; the sequence is GYTLTELS. The framework-2 stretch occupies residues 53–69; that stretch reads MHWVRQAPGKGLEWMGG. A complementarity-determining-2 region spans residues 70-77; the sequence is FDPEDGET. Residues 78-115 form a framework-3 region; that stretch reads IYAQKFQGRVTMTEDTSTDTAYMELSSLRSEDTAVYYC. The tract at residues 116-117 is complementarity-determining-3; it reads AT.

As to quaternary structure, immunoglobulins are composed of two identical heavy chains and two identical light chains; disulfide-linked.

It is found in the secreted. The protein localises to the cell membrane. Its function is as follows. V region of the variable domain of immunoglobulin heavy chains that participates in the antigen recognition. Immunoglobulins, also known as antibodies, are membrane-bound or secreted glycoproteins produced by B lymphocytes. In the recognition phase of humoral immunity, the membrane-bound immunoglobulins serve as receptors which, upon binding of a specific antigen, trigger the clonal expansion and differentiation of B lymphocytes into immunoglobulins-secreting plasma cells. Secreted immunoglobulins mediate the effector phase of humoral immunity, which results in the elimination of bound antigens. The antigen binding site is formed by the variable domain of one heavy chain, together with that of its associated light chain. Thus, each immunoglobulin has two antigen binding sites with remarkable affinity for a particular antigen. The variable domains are assembled by a process called V-(D)-J rearrangement and can then be subjected to somatic hypermutations which, after exposure to antigen and selection, allow affinity maturation for a particular antigen. In Homo sapiens (Human), this protein is Immunoglobulin heavy variable 1-24.